A 193-amino-acid chain; its full sequence is Chromophore lyase CpcS/CpeS 4 (193 aa).

Belongs to the CpcS/CpeS biliprotein lyase family.

Its function is as follows. Covalently attaches a chromophore to Cys residue(s) of phycobiliproteins. This is Chromophore lyase CpcS/CpeS 4 from Trichodesmium erythraeum (strain IMS101).